The primary structure comprises 222 residues: Cytidylate kinase (222 aa).

An ATP-binding site is contributed by 7-15 (GPSASGKSS).

This sequence belongs to the cytidylate kinase family. Type 1 subfamily.

It is found in the cytoplasm. The catalysed reaction is CMP + ATP = CDP + ADP. The enzyme catalyses dCMP + ATP = dCDP + ADP. In Borrelia turicatae (strain 91E135), this protein is Cytidylate kinase.